The following is a 375-amino-acid chain: Naringenin 7-O-methyltransferase (375 aa).

136–142 is a binding site for substrate; it reads LNLDKVF. A substrate binding region spans residues 168–188; it reads LFQYLGQDGNEPSNTLFNQAM. Gly-219, Asp-242, Met-263, and Lys-276 together coordinate S-adenosyl-L-methionine. His-280 serves as the catalytic Proton acceptor.

This sequence belongs to the class I-like SAM-binding methyltransferase superfamily. Cation-independent O-methyltransferase family. COMT subfamily.

It carries out the reaction (2S)-naringenin + S-adenosyl-L-methionine = (2S)-sakuranetin + S-adenosyl-L-homocysteine + H(+). S-adenosyl-L-methionine-dependent methyltransferase involved in the biosynthesis of the sakuranetin, an inducible defense mechanism of O.sativa against pathogen attack. The sequence is that of Naringenin 7-O-methyltransferase from Oryza sativa subsp. japonica (Rice).